The following is a 282-amino-acid chain: Ribosomal RNA small subunit methyltransferase A (282 aa).

Residues 1-21 (MPDFPKEHATPMSNRPPAHQA) form a disordered region. The S-adenosyl-L-methionine site is built by Asn-28, Leu-30, Gly-55, Glu-76, Asp-101, and Asn-126.

The protein belongs to the class I-like SAM-binding methyltransferase superfamily. rRNA adenine N(6)-methyltransferase family. RsmA subfamily.

The protein resides in the cytoplasm. The catalysed reaction is adenosine(1518)/adenosine(1519) in 16S rRNA + 4 S-adenosyl-L-methionine = N(6)-dimethyladenosine(1518)/N(6)-dimethyladenosine(1519) in 16S rRNA + 4 S-adenosyl-L-homocysteine + 4 H(+). Functionally, specifically dimethylates two adjacent adenosines (A1518 and A1519) in the loop of a conserved hairpin near the 3'-end of 16S rRNA in the 30S particle. May play a critical role in biogenesis of 30S subunits. The chain is Ribosomal RNA small subunit methyltransferase A from Chromohalobacter salexigens (strain ATCC BAA-138 / DSM 3043 / CIP 106854 / NCIMB 13768 / 1H11).